A 228-amino-acid chain; its full sequence is Prolactin (228 aa).

The signal sequence occupies residues 1–29 (MGTKRSSLKGSLLLLLLMSSLFLFKSVES). Cysteines 33 and 40 form a disulfide. Phosphoserine is present on residues S55, S63, and S119. 2 disulfide bridges follow: C87-C203 and C220-C228.

The protein belongs to the somatotropin/prolactin family. Interacts with PRLR.

The protein resides in the secreted. Functionally, prolactin acts primarily on the mammary gland by promoting lactation, mammogenesis, mitogenesis and osmoregulation. This Trichosurus vulpecula (Brush-tailed possum) protein is Prolactin (PRL).